A 350-amino-acid polypeptide reads, in one-letter code: Ion-translocating oxidoreductase complex subunit D (350 aa).

The next 3 membrane-spanning stretches (helical) occupy residues Ile20–Phe39, Ile89–Ala109, and Pro123–Leu143. Thr187 is modified (FMN phosphoryl threonine). 5 helical membrane-spanning segments follow: residues Leu215–Leu235, Ile244–Pro264, Phe267–Leu287, Leu301–Pro321, and Asp322–Thr342.

Belongs to the NqrB/RnfD family. As to quaternary structure, the complex is composed of six subunits: RnfA, RnfB, RnfC, RnfD, RnfE and RnfG. FMN is required as a cofactor.

Its subcellular location is the cell inner membrane. In terms of biological role, part of a membrane-bound complex that couples electron transfer with translocation of ions across the membrane. This chain is Ion-translocating oxidoreductase complex subunit D, found in Cronobacter sakazakii (strain ATCC BAA-894) (Enterobacter sakazakii).